An 88-amino-acid chain; its full sequence is DNA-directed RNA polymerase subunit omega (88 aa).

It belongs to the RNA polymerase subunit omega family. The RNAP catalytic core consists of 2 alpha, 1 beta, 1 beta' and 1 omega subunit. When a sigma factor is associated with the core the holoenzyme is formed, which can initiate transcription.

The catalysed reaction is RNA(n) + a ribonucleoside 5'-triphosphate = RNA(n+1) + diphosphate. Its function is as follows. Promotes RNA polymerase assembly. Latches the N- and C-terminal regions of the beta' subunit thereby facilitating its interaction with the beta and alpha subunits. The polypeptide is DNA-directed RNA polymerase subunit omega (Clostridioides difficile (strain 630) (Peptoclostridium difficile)).